Reading from the N-terminus, the 141-residue chain is Large ribosomal subunit protein uL16 (141 aa).

Belongs to the universal ribosomal protein uL16 family. As to quaternary structure, part of the 50S ribosomal subunit.

Its function is as follows. Binds 23S rRNA and is also seen to make contacts with the A and possibly P site tRNAs. This Microchaete diplosiphon (Fremyella diplosiphon) protein is Large ribosomal subunit protein uL16.